A 115-amino-acid polypeptide reads, in one-letter code: UPF0235 protein CTA_0423 (115 aa).

The protein belongs to the UPF0235 family.

This is UPF0235 protein CTA_0423 from Chlamydia trachomatis serovar A (strain ATCC VR-571B / DSM 19440 / HAR-13).